Here is a 496-residue protein sequence, read N- to C-terminus: Probable malate:quinone oxidoreductase (496 aa).

The protein belongs to the MQO family. FAD is required as a cofactor.

The enzyme catalyses (S)-malate + a quinone = a quinol + oxaloacetate. The protein operates within carbohydrate metabolism; tricarboxylic acid cycle; oxaloacetate from (S)-malate (quinone route): step 1/1. The polypeptide is Probable malate:quinone oxidoreductase (Prochlorococcus marinus (strain MIT 9303)).